The following is a 488-amino-acid chain: Proline--tRNA ligase (488 aa).

This sequence belongs to the class-II aminoacyl-tRNA synthetase family. ProS type 3 subfamily. As to quaternary structure, homodimer.

It is found in the cytoplasm. The catalysed reaction is tRNA(Pro) + L-proline + ATP = L-prolyl-tRNA(Pro) + AMP + diphosphate. Functionally, catalyzes the attachment of proline to tRNA(Pro) in a two-step reaction: proline is first activated by ATP to form Pro-AMP and then transferred to the acceptor end of tRNA(Pro). The protein is Proline--tRNA ligase of Borreliella afzelii (strain PKo) (Borrelia afzelii).